The chain runs to 170 residues: CCHC-type zinc finger nucleic acid binding protein (170 aa).

Residue Ser-2 is modified to N-acetylserine. A CCHC-type 1 zinc finger spans residues 4-21 (NECFKCGRSGHWARECPT). Position 8 is an N6-acetyllysine (Lys-8). 2 positions are modified to omega-N-methylarginine; by PRMT1: Arg-25 and Arg-27. The tract at residues 25–33 (RGRGMRSRG) is RNA-binding Arg/Gly-rich region (RGG-box). The residue at position 42 (Ser-42) is a Phosphoserine. 6 CCHC-type zinc fingers span residues 45 to 62 (DICY…DCDL), 65 to 82 (DACY…DCKE), 89 to 106 (QCCY…DCDH), 110 to 127 (QKCY…DCTK), 128 to 145 (VKCY…NCSK), and 149 to 166 (VNCY…ECTI). Position 72 is an omega-N-methylarginine (Arg-72).

In terms of assembly, associates with the 40S ribosomal subunit, the 80S ribosome and with polysomes. In terms of processing, arginine methylation by PRMT1 in the Arg/Gly-rich region impedes RNA binding.

It localises to the nucleus. Its subcellular location is the cytoplasm. The protein resides in the endoplasmic reticulum. In terms of biological role, single-stranded DNA-binding protein that preferentially binds to the sterol regulatory element (SRE) sequence 5'-GTGCGGTG-3', and thereby mediates transcriptional repression. Has a role as transactivator of the Myc promoter. Binds single-stranded RNA in a sequence-specific manner. Binds G-rich elements in target mRNA coding sequences. Prevents G-quadruplex structure formation in vitro, suggesting a role in supporting translation by resolving stable structures on mRNAs. The polypeptide is CCHC-type zinc finger nucleic acid binding protein (CNBP) (Bos taurus (Bovine)).